A 636-amino-acid chain; its full sequence is Chaperone protein DnaK (636 aa).

Threonine 203 bears the Phosphothreonine; by autocatalysis mark. Residues 602–636 (VYGKQQEGAPAQEEPSAEGKKADDEGTVEGEFREV) form a disordered region. Basic and acidic residues predominate over residues 618-636 (AEGKKADDEGTVEGEFREV).

It belongs to the heat shock protein 70 family.

Acts as a chaperone. The polypeptide is Chaperone protein DnaK (Dehalococcoides mccartyi (strain CBDB1)).